The following is a 206-amino-acid chain: Thiamine-phosphate synthase (206 aa).

4-amino-2-methyl-5-(diphosphooxymethyl)pyrimidine contacts are provided by residues 39 to 43 (QYREK) and Asn74. Positions 75 and 94 each coordinate Mg(2+). Ser112 is a binding site for 4-amino-2-methyl-5-(diphosphooxymethyl)pyrimidine. 138 to 140 (TNT) lines the 2-[(2R,5Z)-2-carboxy-4-methylthiazol-5(2H)-ylidene]ethyl phosphate pocket. Lys141 is a binding site for 4-amino-2-methyl-5-(diphosphooxymethyl)pyrimidine. 2-[(2R,5Z)-2-carboxy-4-methylthiazol-5(2H)-ylidene]ethyl phosphate contacts are provided by residues Gly170 and 190–191 (IS).

This sequence belongs to the thiamine-phosphate synthase family. Requires Mg(2+) as cofactor.

It catalyses the reaction 2-[(2R,5Z)-2-carboxy-4-methylthiazol-5(2H)-ylidene]ethyl phosphate + 4-amino-2-methyl-5-(diphosphooxymethyl)pyrimidine + 2 H(+) = thiamine phosphate + CO2 + diphosphate. The catalysed reaction is 2-(2-carboxy-4-methylthiazol-5-yl)ethyl phosphate + 4-amino-2-methyl-5-(diphosphooxymethyl)pyrimidine + 2 H(+) = thiamine phosphate + CO2 + diphosphate. The enzyme catalyses 4-methyl-5-(2-phosphooxyethyl)-thiazole + 4-amino-2-methyl-5-(diphosphooxymethyl)pyrimidine + H(+) = thiamine phosphate + diphosphate. It functions in the pathway cofactor biosynthesis; thiamine diphosphate biosynthesis; thiamine phosphate from 4-amino-2-methyl-5-diphosphomethylpyrimidine and 4-methyl-5-(2-phosphoethyl)-thiazole: step 1/1. Functionally, condenses 4-methyl-5-(beta-hydroxyethyl)thiazole monophosphate (THZ-P) and 2-methyl-4-amino-5-hydroxymethyl pyrimidine pyrophosphate (HMP-PP) to form thiamine monophosphate (TMP). The sequence is that of Thiamine-phosphate synthase from Oceanobacillus iheyensis (strain DSM 14371 / CIP 107618 / JCM 11309 / KCTC 3954 / HTE831).